The chain runs to 158 residues: Transcriptional repressor NrdR (158 aa).

Residues 1–20 (MRCPSCGSLDTQVKDSRPTE) are disordered. The segment at 3–34 (CPSCGSLDTQVKDSRPTEDSSVIRRRRVCLTC) is a zinc-finger region. Residues 49 to 139 (LTVIKRNGRR…VYRNFREAKD (91 aa)) enclose the ATP-cone domain.

Belongs to the NrdR family. Zn(2+) serves as cofactor.

In terms of biological role, negatively regulates transcription of bacterial ribonucleotide reductase nrd genes and operons by binding to NrdR-boxes. This chain is Transcriptional repressor NrdR, found in Afipia carboxidovorans (strain ATCC 49405 / DSM 1227 / KCTC 32145 / OM5) (Oligotropha carboxidovorans).